Consider the following 945-residue polypeptide: Glutamyl aminopeptidase (945 aa).

The Cytoplasmic segment spans residues 1–18 (MNFAEEEPSKKYCIKGKH). The chain crosses the membrane as a helical; Signal-anchor for type II membrane protein span at residues 19 to 39 (VAIICATVVAVGLIVGLSVGL). Residues 40 to 945 (TRSCEPGTTP…SISEWFTSMP (906 aa)) lie on the Extracellular side of the membrane. The tract at residues 45 to 77 (PGTTPAPSNPPPHTSTALPPQDQNVCPDSDDES) is disordered. N-linked (GlcNAc...) asparagine glycans are attached at residues asparagine 116 and asparagine 189. Residue glutamate 215 coordinates substrate. Residues asparagine 236 and asparagine 316 are each glycosylated (N-linked (GlcNAc...) asparagine). 349–353 (GAMEN) lines the substrate pocket. Histidine 385 serves as a coordination point for Zn(2+). Glutamate 386 (proton acceptor) is an active-site residue. Zn(2+) is bound by residues histidine 389 and glutamate 408. N-linked (GlcNAc...) asparagine glycans are attached at residues asparagine 546, asparagine 584, asparagine 601, asparagine 640, asparagine 669, asparagine 754, asparagine 766, and asparagine 792. Residue arginine 878 coordinates substrate.

The protein belongs to the peptidase M1 family. Homodimer; disulfide-linked. The cofactor is Zn(2+). As to expression, highest expression in kidney proximal tubules and ileum enterocytes. High expression also detected in liver and pituitary. Lower levels in heart, adrenal gland and brain. Not detected in aorta, lung or spleen. In heart, higher levels in ventricle than in atrium. Also expressed in glomerular mesangial cells.

The protein localises to the cell membrane. The enzyme catalyses Release of N-terminal glutamate (and to a lesser extent aspartate) from a peptide.. Its activity is regulated as follows. Substrate specificity is modulated by calcium which enhances the enzymatic activity for cleavage of acidic residues while reducing its activity with basic residues. Inhibited by aminopeptidase inhibitors amastatin and bestatin. Its function is as follows. Regulates central hypertension through its calcium-modulated preference to cleave N-terminal acidic residues from peptides such as angiotensin II. This chain is Glutamyl aminopeptidase (Enpep), found in Rattus norvegicus (Rat).